Here is a 187-residue protein sequence, read N- to C-terminus: uncharacterized protein (187 aa).

Positions 1-28 (MRLHRTNNSRRCTILLILALKIFDFVDT) are cleaved as a signal peptide. N-linked (GlcNAc...) asparagine glycosylation is found at asparagine 58, asparagine 70, asparagine 156, and asparagine 168.

Its subcellular location is the secreted. This is an uncharacterized protein from Caenorhabditis elegans.